A 1441-amino-acid polypeptide reads, in one-letter code: ABC transporter G family member 41 (1441 aa).

Residues 1–14 show a composition bias toward basic and acidic residues; the sequence is MEDKKQQQQQQREE. The interval 1–28 is disordered; that stretch reads MEDKKQQQQQQREEAEAEEEAPVVPSSL. The 274-residue stretch at 159-432 folds into the ABC transporter 1 domain; that stretch reads ATARGLSRRP…FESCGFKCPE (274 aa). 192-199 provides a ligand contact to ATP; it reads GPPGCGKT. Residues 510-722 enclose the ABC transmembrane type-2 1 domain; the sequence is DLLKACFARE…AEIGLTGNEF (213 aa). The next 6 helical transmembrane spans lie at 528–548, 566–586, 600–620, 642–662, 672–692, and 758–778; these read FIYITKVVQLGLLAVITGTVF, SLFYALILLLVNGFPELAIAV, FYPAWAYAIPSFILKIPLSLV, FFCQLLILFLVHTGALSLFRC, ASSVGGTMSFLVILLFGGFII, and ASALIGFILLLNVGYAIGLTI. In terms of domain architecture, ABC transporter 2 spans 838–1090; the sequence is ISFQDVNYYV…NVIHYFETIP (253 aa). 883–890 contributes to the ATP binding site; the sequence is GVTGAGKT. Positions 1163–1379 constitute an ABC transmembrane type-2 2 domain; sequence EQLKACIWKQ…TLNVFFTTQF (217 aa). A run of 7 helical transmembrane segments spans residues 1187–1207, 1215–1235, 1272–1292, 1300–1320, 1329–1349, 1357–1377, and 1413–1433; these read ILFITISCIVFGVLFWQQGDI, GLFTILGCMYGTTLFTGINNC, IPYVLVQILLIMFIAYPMIGY, FWFMYTIACTLLYFLYFGMMI, VASILASMFYTLQNLMSGFIV, WWIWLYYTSPLSWTLNVFFTT, and LAAIILAMFPILFAILFGLSI.

This sequence belongs to the ABC transporter superfamily. ABCG family. PDR (TC 3.A.1.205) subfamily.

The protein resides in the membrane. Its function is as follows. May be a general defense protein. This Oryza sativa subsp. japonica (Rice) protein is ABC transporter G family member 41.